The sequence spans 498 residues: ATP synthase subunit beta, chloroplastic (498 aa).

172-179 (GGAGVGKT) provides a ligand contact to ATP.

The protein belongs to the ATPase alpha/beta chains family. As to quaternary structure, F-type ATPases have 2 components, CF(1) - the catalytic core - and CF(0) - the membrane proton channel. CF(1) has five subunits: alpha(3), beta(3), gamma(1), delta(1), epsilon(1). CF(0) has four main subunits: a(1), b(1), b'(1) and c(9-12).

The protein resides in the plastid. Its subcellular location is the chloroplast thylakoid membrane. It carries out the reaction ATP + H2O + 4 H(+)(in) = ADP + phosphate + 5 H(+)(out). Its function is as follows. Produces ATP from ADP in the presence of a proton gradient across the membrane. The catalytic sites are hosted primarily by the beta subunits. The sequence is that of ATP synthase subunit beta, chloroplastic from Myristica fragrans (Nutmeg).